The following is a 622-amino-acid chain: Chaperone protein HscA homolog (622 aa).

This sequence belongs to the heat shock protein 70 family.

In terms of biological role, chaperone involved in the maturation of iron-sulfur cluster-containing proteins. Has a low intrinsic ATPase activity which is markedly stimulated by HscB. In Burkholderia orbicola (strain MC0-3), this protein is Chaperone protein HscA homolog.